The following is a 193-amino-acid chain: nitroreductase FRM2 (193 aa).

It belongs to the nitroreductase family. It depends on FMN as a cofactor.

It is found in the cytoplasm. It localises to the nucleus. It catalyses the reaction 4-(hydroxyamino)quinoline N-oxide + 2 NAD(+) + H2O = 4-nitroquinoline N-oxide + 2 NADH + 2 H(+). In terms of biological role, type II nitroreductase, able to reduce 4-nitroquinoline N-oxide (4-NQO) into 4-aminoquinoline-N-oxide (4-AQO) via 4-hydroxyaminoquinoline (4-HAQO), using NADH as reductant. involved in the oxidative stress response. Plays a possible role in the metal stress response. Involved in negative regulation of fatty acid metabolism. This is nitroreductase FRM2 from Saccharomyces cerevisiae (strain ATCC 204508 / S288c) (Baker's yeast).